A 333-amino-acid polypeptide reads, in one-letter code: tRNA dimethylallyltransferase (333 aa).

Glycine 23–threonine 30 serves as a coordination point for ATP. Threonine 25–threonine 30 contacts substrate. 2 interaction with substrate tRNA regions span residues aspartate 53–leucine 56 and glutamine 177–arginine 181.

The protein belongs to the IPP transferase family. As to quaternary structure, monomer. The cofactor is Mg(2+).

It catalyses the reaction adenosine(37) in tRNA + dimethylallyl diphosphate = N(6)-dimethylallyladenosine(37) in tRNA + diphosphate. Catalyzes the transfer of a dimethylallyl group onto the adenine at position 37 in tRNAs that read codons beginning with uridine, leading to the formation of N6-(dimethylallyl)adenosine (i(6)A). The chain is tRNA dimethylallyltransferase from Polynucleobacter asymbioticus (strain DSM 18221 / CIP 109841 / QLW-P1DMWA-1) (Polynucleobacter necessarius subsp. asymbioticus).